A 153-amino-acid polypeptide reads, in one-letter code: Protein SprT-like (153 aa).

Positions 6 to 148 constitute a SprT-like domain; sequence LQQLTEQLSL…CGKCGGKIKE (143 aa). Residue His67 coordinates Zn(2+). Glu68 is a catalytic residue. His71 contributes to the Zn(2+) binding site.

Belongs to the SprT family. The cofactor is Zn(2+).

Its subcellular location is the cytoplasm. The protein is Protein SprT-like of Bacillus licheniformis (strain ATCC 14580 / DSM 13 / JCM 2505 / CCUG 7422 / NBRC 12200 / NCIMB 9375 / NCTC 10341 / NRRL NRS-1264 / Gibson 46).